The primary structure comprises 935 residues: Pre-mRNA-splicing factor CWC22 homolog (935 aa).

The tract at residues 1–179 (MSRSPSPDSP…PKDLLRTRTG (179 aa)) is disordered. 2 stretches are compositionally biased toward basic and acidic residues: residues 13-25 (VRDD…REQS) and 49-70 (ESSR…DEKM). Basic residues predominate over residues 84–148 (QHRRHRESRS…RSPARRRSPV (65 aa)). Over residues 159–175 (PTEEPEKKKNDPKDLLR) the composition is skewed to basic and acidic residues. Residues 212–400 (KKKIHGLVNR…ETAMQIRKDK (189 aa)) form the MIF4G domain. A disordered region spans residues 463 to 489 (ADISSDEEEEVEDDDEESEAEEAPRKT). Residues 465-483 (ISSDEEEEVEDDDEESEAE) show a composition bias toward acidic residues. In terms of domain architecture, MI spans 502–633 (AFRREVYLTL…EWKILADVKM (132 aa)). The tract at residues 725-935 (KAAQSSSDSS…VGSDDRRRRH (211 aa)) is disordered. Low complexity predominate over residues 729-763 (SSSDSSSDSSDSSDSSDSSGSSDSSDDSSSSSSSD). Basic and acidic residues-rich tracts occupy residues 780–891 (KKKE…DRKE) and 897–935 (DRRD…RRRH).

It belongs to the CWC22 family.

It is found in the nucleus. Its subcellular location is the nucleus speckle. In terms of biological role, required for early embryogenesis and tissue differentiation. Required for pre-mRNA splicing and for exon-junction complex (EJC) assembly. Hinders EIF4A3 from non-specifically binding RNA and escorts it to the splicing machinery to promote EJC assembly on mature mRNAs. Through its role in EJC assembly, required for nonsense-mediated mRNA decay. The chain is Pre-mRNA-splicing factor CWC22 homolog from Caenorhabditis briggsae.